Consider the following 885-residue polypeptide: Exosome complex component 10 (885 aa).

Lys19 is covalently cross-linked (Glycyl lysine isopeptide (Lys-Gly) (interchain with G-Cter in SUMO2)). A 3'-5' exonuclease domain is found at 289–455 (HFISSLDELV…YIYDKMRLEM (167 aa)). Asp313, Glu315, Asp371, and Asp440 together coordinate Mg(2+). The HRDC domain occupies 503–583 (NTQQLTAFQL…QQAREMPLLK (81 aa)). Lys583 is covalently cross-linked (Glycyl lysine isopeptide (Lys-Gly) (interchain with G-Cter in SUMO1); alternate). Lys583 is covalently cross-linked (Glycyl lysine isopeptide (Lys-Gly) (interchain with G-Cter in SUMO2); alternate). Lys710 is covalently cross-linked (Glycyl lysine isopeptide (Lys-Gly) (interchain with G-Cter in SUMO2)). Basic and acidic residues-rich tracts occupy residues 776–794 (AAKK…EQKQ) and 804–816 (KPKD…KEFT). Residues 776–885 (AAKKRERATS…RGFRYNWPQR (110 aa)) form a disordered region. Ser821 is modified (phosphoserine). Residues Lys826, Lys833, and Lys859 each participate in a glycyl lysine isopeptide (Lys-Gly) (interchain with G-Cter in SUMO2) cross-link. Residues 831–848 (NSKSKVSSQFDPNKQTPS) are compositionally biased toward polar residues. The segment covering 861-871 (SVGNKSMSFPT) has biased composition (polar residues). A Glycyl lysine isopeptide (Lys-Gly) (interchain with G-Cter in SUMO2) cross-link involves residue Lys873.

The protein belongs to the exosome component 10/RRP6 family. In terms of assembly, component of the RNA exosome complex. The catalytically inactive RNA exosome core complex (Exo-9) associates with the catalytic subunit EXOSC10/RRP6 (via its N-terminus). Exo-9 may associate with DIS3 to form the nucleolar exosome complex, or DIS3L to form the cytoplasmic exosome complex. The RNA exosome complex interacts with cofactors C1D/RRP47, MPHOSPH6/MPP6 and MTREX/MTR4. Interacts with MTREX; the interaction with MTREX mediates the association of MTREX with nuclear RNA exosomes. Part of the small subunit (SSU) processome, composed of more than 70 proteins and the RNA chaperone small nucleolar RNA (snoRNA) U3. Interacts with ALYREF/THOC4. Interacts with DHX36; this interaction occurs in a RNase-insensitive manner. Interacts with NRDE2. Interacts (via C-terminus) with USP36 (via C-terminus); the interaction is facilitated by the association with RNA and promotes sumoylation of EXOSC10. Mg(2+) is required as a cofactor. In terms of processing, sumoylated by USP36; sumoylation does not significantly affect EXOSC10 nucleolar localization and association with core exosome and USP36, but regulates the nucleolar RNA exosome activity in rRNA processing by promoting binding of EXOSC10 to pre-rRNAs. Effects of sumoylation on EXOSC10 levels vary between different studies. Sumoylation of EXOSC10 is required for the modulation of EXOSC10 effects on cellular protein translation and cell proliferation. Sumoylation is promoted by mild hypothermia.

The protein localises to the cytoplasm. It localises to the nucleus. It is found in the nucleolus. The protein resides in the nucleoplasm. With respect to regulation, arginine-rich dipeptide repeat proteins expressed from C9orf72-derived repeat RNA interact with EXOSC10 and inhibit its ability to promote degradation of this RNA. Functionally, catalytic component of the RNA exosome complex which has 3'-&gt;5' exoribonuclease activity and participates in a multitude of cellular RNA processing and degradation events. In the nucleus, the RNA exosome complex is involved in proper maturation of stable RNA species such as rRNA, snRNA and snoRNA, in the elimination of RNA processing by-products and non-coding 'pervasive' transcripts, such as antisense RNA species and promoter-upstream transcripts (PROMPTs), and of mRNAs with processing defects, thereby limiting or excluding their export to the cytoplasm. Part of the small subunit (SSU) processome, first precursor of the small eukaryotic ribosomal subunit. During the assembly of the SSU processome in the nucleolus, many ribosome biogenesis factors, an RNA chaperone and ribosomal proteins associate with the nascent pre-rRNA and work in concert to generate RNA folding, modifications, rearrangements and cleavage as well as targeted degradation of pre-ribosomal RNA by the RNA exosome. The RNA exosome may be involved in Ig class switch recombination (CSR) and/or Ig variable region somatic hypermutation (SHM) by targeting AICDA deamination activity to transcribed dsDNA substrates. In the cytoplasm, the RNA exosome complex is involved in general mRNA turnover and specifically degrades inherently unstable mRNAs containing AU-rich elements (AREs) within their 3' untranslated regions, and in RNA surveillance pathways, preventing translation of aberrant mRNAs. It seems to be involved in degradation of histone mRNA. EXOSC10 is required for nucleolar localization of C1D and probably mediates the association of MTREX, C1D and MPHOSPH6 with the RNA exosome involved in the maturation of 5.8S rRNA. Plays a role in the recruitment of replication protein A complex (RPA) and RAD51 to DNA double-strand breaks caused by irradiation, contributing to DNA repair by homologous recombination. Regulates levels of damage-induced RNAs in order to prevent DNA-RNA hybrid formation at DNA double-strand breaks and limit DNA end resection after damage. Plays a role in oocyte development, maturation and survival. Required for normal testis development and mitotic division of spermatogonia. Plays a role in proper embryo development. Required for global protein translation. Required for cell proliferation. Regulates metabolism of C9orf72-derived repeat RNA that can be translated into toxic dipeptide repeat proteins. In Homo sapiens (Human), this protein is Exosome complex component 10.